The sequence spans 485 residues: Acyl transferase 1 (485 aa).

The active-site Proton acceptor is the H172.

The protein belongs to the plant acyltransferase family. In terms of tissue distribution, highly expressed in young panicles. Expressed in leaf sheaths and panicles.

Functionally, involved in defense against pathogens. May contribute to disease resistance by potentiating disease resistance signaling, or producing phytoalexin-like secondary products. The chain is Acyl transferase 1 from Oryza sativa subsp. japonica (Rice).